A 349-amino-acid chain; its full sequence is MTTVLAIETSCDETAVAIVNNRKVCSSIVTSQIPVHQQYGGVVPEVASRQHLETINVAIAQALEQAQLDWGQIDAIAATCAPGLLGALLVGLTAAKTLAMVHNKPFLGVHHLEGHIYATYLSESSLNPPFLSLLVSGGHTSLIFVKDCGNYETLGQTRDDAAGEAFDKVARLLKLGYPGGPVIDKLAQQGNPQAFALPEGKVSLPGGGFHRYDASFSGLKTAVLRLVQQLEKDGEQVPVADVAASFQETVARSLTKRAIACALDYGLDTIAIGGGVAANSGLRKNLQAAAVKHNLRVLFPPLKFCTDNAAMIGCAAADHLSHGHTSPLTLGVESRLALTQVMKLYHPLE.

The Fe cation site is built by histidine 111 and histidine 115. Substrate is bound by residues 134–138 (LVSGG), aspartate 167, glycine 180, aspartate 184, and asparagine 279. Fe cation is bound at residue aspartate 307.

It belongs to the KAE1 / TsaD family. Fe(2+) serves as cofactor.

It is found in the cytoplasm. It catalyses the reaction L-threonylcarbamoyladenylate + adenosine(37) in tRNA = N(6)-L-threonylcarbamoyladenosine(37) in tRNA + AMP + H(+). Its function is as follows. Required for the formation of a threonylcarbamoyl group on adenosine at position 37 (t(6)A37) in tRNAs that read codons beginning with adenine. Is involved in the transfer of the threonylcarbamoyl moiety of threonylcarbamoyl-AMP (TC-AMP) to the N6 group of A37, together with TsaE and TsaB. TsaD likely plays a direct catalytic role in this reaction. The protein is tRNA N6-adenosine threonylcarbamoyltransferase of Nostoc punctiforme (strain ATCC 29133 / PCC 73102).